The chain runs to 811 residues: Ribonucleoside-diphosphate reductase large subunit (811 aa).

Substrate is bound by residues threonine 231, 246-247, glycine 277, 450-454, and 636-640; these read SC, NLCTE, and PTASS. The cysteines at positions 247 and 467 are disulfide-linked. Catalysis depends on asparagine 450, which acts as the Proton acceptor. Catalysis depends on cysteine 452, which acts as the Cysteine radical intermediate. The active-site Proton acceptor is glutamate 454.

The protein belongs to the ribonucleoside diphosphate reductase large chain family. As to quaternary structure, heterotetramer composed of a homodimer of the large subunit (R1) and a homodimer of the small subunit (R2). Larger multisubunit protein complex are also active, composed of (R1)n(R2)n.

The catalysed reaction is a 2'-deoxyribonucleoside 5'-diphosphate + [thioredoxin]-disulfide + H2O = a ribonucleoside 5'-diphosphate + [thioredoxin]-dithiol. In terms of biological role, ribonucleoside-diphosphate reductase holoenzyme provides the precursors necessary for viral DNA synthesis. Allows virus growth in non-dividing cells, as well as reactivation from latency in infected hosts. Catalyzes the biosynthesis of deoxyribonucleotides from the corresponding ribonucleotides. The protein is Ribonucleoside-diphosphate reductase large subunit of Amazona oratrix (yellow-headed parrot).